The primary structure comprises 441 residues: Deoxyguanosinetriphosphate triphosphohydrolase-like protein (441 aa).

Positions 62-255 (RLTHSLEAAQ…MELADDIAYG (194 aa)) constitute an HD domain.

This sequence belongs to the dGTPase family. Type 2 subfamily.

The sequence is that of Deoxyguanosinetriphosphate triphosphohydrolase-like protein (dgt) from Vibrio cholerae serotype O1 (strain ATCC 39541 / Classical Ogawa 395 / O395).